The chain runs to 173 residues: Crossover junction endodeoxyribonuclease RuvC (173 aa).

Active-site residues include D8, E67, and D139. D8, E67, and D139 together coordinate Mg(2+).

The protein belongs to the RuvC family. Homodimer which binds Holliday junction (HJ) DNA. The HJ becomes 2-fold symmetrical on binding to RuvC with unstacked arms; it has a different conformation from HJ DNA in complex with RuvA. In the full resolvosome a probable DNA-RuvA(4)-RuvB(12)-RuvC(2) complex forms which resolves the HJ. It depends on Mg(2+) as a cofactor.

The protein resides in the cytoplasm. The enzyme catalyses Endonucleolytic cleavage at a junction such as a reciprocal single-stranded crossover between two homologous DNA duplexes (Holliday junction).. In terms of biological role, the RuvA-RuvB-RuvC complex processes Holliday junction (HJ) DNA during genetic recombination and DNA repair. Endonuclease that resolves HJ intermediates. Cleaves cruciform DNA by making single-stranded nicks across the HJ at symmetrical positions within the homologous arms, yielding a 5'-phosphate and a 3'-hydroxyl group; requires a central core of homology in the junction. The consensus cleavage sequence is 5'-(A/T)TT(C/G)-3'. Cleavage occurs on the 3'-side of the TT dinucleotide at the point of strand exchange. HJ branch migration catalyzed by RuvA-RuvB allows RuvC to scan DNA until it finds its consensus sequence, where it cleaves and resolves the cruciform DNA. The polypeptide is Crossover junction endodeoxyribonuclease RuvC (Salmonella arizonae (strain ATCC BAA-731 / CDC346-86 / RSK2980)).